Consider the following 89-residue polypeptide: Putative membrane protein insertion efficiency factor (89 aa).

The segment at 68–89 (VPPPNSDARNAPHEAEASSHRL) is disordered. Positions 77–89 (NAPHEAEASSHRL) are enriched in basic and acidic residues.

Belongs to the UPF0161 family.

Its subcellular location is the cell inner membrane. Its function is as follows. Could be involved in insertion of integral membrane proteins into the membrane. The polypeptide is Putative membrane protein insertion efficiency factor (Burkholderia thailandensis (strain ATCC 700388 / DSM 13276 / CCUG 48851 / CIP 106301 / E264)).